Reading from the N-terminus, the 201-residue chain is Holliday junction resolvase RecU (201 aa).

The disordered stretch occupies residues M1–P26. 4 residues coordinate Mg(2+): T87, D89, E102, and Q121.

This sequence belongs to the RecU family. Mg(2+) is required as a cofactor.

Its subcellular location is the cytoplasm. The enzyme catalyses Endonucleolytic cleavage at a junction such as a reciprocal single-stranded crossover between two homologous DNA duplexes (Holliday junction).. Functionally, endonuclease that resolves Holliday junction intermediates in genetic recombination. Cleaves mobile four-strand junctions by introducing symmetrical nicks in paired strands. Promotes annealing of linear ssDNA with homologous dsDNA. Required for DNA repair, homologous recombination and chromosome segregation. This chain is Holliday junction resolvase RecU, found in Listeria monocytogenes serotype 4a (strain HCC23).